Consider the following 220-residue polypeptide: Catechol O-methyltransferase (220 aa).

S-adenosyl-L-methionine contacts are provided by residues valine 44, glutamate 66, 68–69 (GT), serine 74, glutamate 92, and alanine 121. Aspartate 139 provides a ligand contact to a divalent metal cation. Aspartate 141 lines the S-adenosyl-L-methionine pocket. A divalent metal cation contacts are provided by aspartate 165 and asparagine 166.

It belongs to the class I-like SAM-binding methyltransferase superfamily. Cation-dependent O-methyltransferase family. Homodimer. A divalent metal cation is required as a cofactor.

The catalysed reaction is a catechol + S-adenosyl-L-methionine = a guaiacol + S-adenosyl-L-homocysteine + H(+). Inhibited by EDTA. Functionally, catechol O-methyltransferase that can use various catechol-like compounds such as gallic acid (GA), 3,4-dihydroxy-5-methoxy-benzoic acid (5OMeBA), protocatechuic acid (PCA), 3,4-dihydroxy-benzaldehyde (DHA), dopamine, caffeic acid (CA), luteolin, quercetin, and 5-hydroxyuridine. The polypeptide is Catechol O-methyltransferase (Mycobacterium tuberculosis (strain ATCC 25618 / H37Rv)).